A 712-amino-acid polypeptide reads, in one-letter code: Capsid protein (712 aa).

Disordered stretches follow at residues 614–633 and 646–665; these read LTSTEEGSPQKKKRRDKEVR and CWMSPTPETPPKAGKTPESS. A coiled-coil region spans residues 670–706; it reads YDNHTKLAKRVKKEIHNQNRRHRLLLAHLRRERDRLL.

This sequence belongs to the anelloviridae capsid protein family.

It localises to the virion. In terms of biological role, self-assembles to form an icosahedral capsid with a T=1 symmetry, about 30 nm in diameter, and consisting of 60 capsid proteins. The capsid encapsulates the genomic DNA. Capsid protein is involved in attachment and entry into the host cell. The chain is Capsid protein from Torque teno tamarin virus (isolate So-TTV2).